The following is a 942-amino-acid chain: MINYKNTLNLPYTLFPMRANLPVCEPTILERWYKDNLYEAIRHKKSKKKLFILHDGPPYVNGSIHLGHAVNKVLKDIILKYKTLTGYNAPYIPGWDCHGLPIELQVERLIGQLGVNVDPNEFRSICRNYVLDQIEIQKKDFVRLGVLGDWSRPYLTMDFKTEANIIRTLSKVISNGYFYKGTKPVHWCFQCCSVLAESEVEYNNHCSPAIDVAFFAVDNIRISKIFNIDLCQRVIELVIWTTTPWTLPSNQAISVHPDYSYQLIAINNSKYIIIAANLVNTVMQRIQCFSWRILGETSGNSLESLKFRHPFMSFDVPVVLSGHVALDSGTGVVHIAPNHGVDDYIIARKYNFKIVNIINETGHYVSNVHPMLDGVQVFQSNEIIIKLLNQSGSLLHVNHNYKHNYPYCWRHAVPVIFKATAQWFLSMDKYNLRNKLLQTIHQVDWIPNKGEYSIETMIVNRPDWCLSRQRVWGVPIPLFIHKKTSILHPRTIALMEVIAQHVEQNGIQAWWDLKTEDIIDNEEADQYEKVLDTLDVWFDSGSTHYSVIPERLEYRKQSPDLYLEGSDQYRGWFMSSLIISTVITGQAPYREVLTHGFTVDAQGRKMSKSLGNVISPQEIIKDFGADILRLWIASSDYSKEMAISNAILKHTIDVYRRIRNTARFCLANISDFDPEKDSVHPENMIELDCWAIDRALSVQLEVISDYNKYNFHNVIQRIMQFCSVEMGSFYLDVIKDRQYTTKKNSKERRSCQTALYHIIESMVRWIAPVLSFTADEIWRHIPGNRSKYVFTEEWYNGLFSISSKQIMNSHDWNTFLNVRSEVNKIVEQTRLNGIIGGSLDASVVLYATPELANTLRILGNELSFGLITSSAIVSDYCNGFNVTQYTQEGIPGLKIFLEKAKGKKCLRCWHYRLDIGQYKNYSNICARCVNNIVGPGEKRRFF.

A 'HIGH' region motif is present at residues 58–68; sequence PYVNGSIHLGH. Glutamate 564 serves as a coordination point for L-isoleucyl-5'-AMP. The 'KMSKS' region motif lies at 605 to 609; the sequence is KMSKS. Lysine 608 provides a ligand contact to ATP. Positions 905, 908, 925, and 928 each coordinate Zn(2+).

The protein belongs to the class-I aminoacyl-tRNA synthetase family. IleS type 1 subfamily. As to quaternary structure, monomer. It depends on Zn(2+) as a cofactor.

The protein localises to the cytoplasm. The catalysed reaction is tRNA(Ile) + L-isoleucine + ATP = L-isoleucyl-tRNA(Ile) + AMP + diphosphate. Its function is as follows. Catalyzes the attachment of isoleucine to tRNA(Ile). As IleRS can inadvertently accommodate and process structurally similar amino acids such as valine, to avoid such errors it has two additional distinct tRNA(Ile)-dependent editing activities. One activity is designated as 'pretransfer' editing and involves the hydrolysis of activated Val-AMP. The other activity is designated 'posttransfer' editing and involves deacylation of mischarged Val-tRNA(Ile). This is Isoleucine--tRNA ligase from Blochmanniella pennsylvanica (strain BPEN).